Reading from the N-terminus, the 297-residue chain is Heme A synthase (297 aa).

Over 1–6 (MNRKLS) the chain is Cytoplasmic. The chain crosses the membrane as a helical span at residues 7–27 (IFSAFVTFTMMIVLLMGGTVT). The Extracellular segment spans residues 28–62 (KTDSGNGCGTDWPLCHGELIPTNPSVETMIEYSHR). A disulfide bond links Cys35 and Cys42. Glu58 is an active-site residue. His61 contacts heme o. A helical membrane pass occupies residues 63–83 (AVTGVVGLLIIALCLWTLVAF). At 84–90 (KDRLDIK) the chain is on the cytoplasmic side. A helical transmembrane segment spans residues 91–111 (IFAFLAFIFMLIQSIVGAGAV). The Extracellular portion of the chain corresponds to 112 to 121 (VWQQSDLVMA). A helical membrane pass occupies residues 122-142 (LHFGISLISFASLLILTILIM). His123 is a binding site for heme o. Over 143–160 (ERSGQEFRESVPAFLRKL) the chain is Cytoplasmic. Residues 161–181 (LYGLLIYTLIVVYTGAFVRHV) form a helical membrane-spanning segment. Topologically, residues 182-201 (GATYACVGWPVCSQPTMTFE) are extracellular. Cys187 and Cys193 are joined by a disulfide. The helical transmembrane segment at 202–222 (AWVQMIHRILAGLLFFYTLFV) threads the bilayer. His208 lines the heme b pocket. The Cytoplasmic segment spans residues 223-236 (HYTAIRLKHRTSRT). A helical membrane pass occupies residues 237 to 257 (GMLFATFFISCQVATGAWIVL). Residues 258-262 (GGHAT) lie on the Extracellular side of the membrane. Residues 263–283 (YVPLLHAFLITCYFGVISYLA) form a helical membrane-spanning segment. Position 268 (His268) interacts with heme b. Over 284–297 (YHAFRTRKKDSRLR) the chain is Cytoplasmic.

The protein belongs to the COX15/CtaA family. Type 1 subfamily. In terms of assembly, interacts with CtaB. It depends on heme b as a cofactor.

Its subcellular location is the cell membrane. The catalysed reaction is Fe(II)-heme o + 2 A + H2O = Fe(II)-heme a + 2 AH2. It participates in porphyrin-containing compound metabolism; heme A biosynthesis; heme A from heme O: step 1/1. Its function is as follows. Catalyzes the conversion of heme O to heme A by two successive hydroxylations of the methyl group at C8. The first hydroxylation forms heme I, the second hydroxylation results in an unstable dihydroxymethyl group, which spontaneously dehydrates, resulting in the formyl group of heme A. The polypeptide is Heme A synthase (Exiguobacterium sibiricum (strain DSM 17290 / CCUG 55495 / CIP 109462 / JCM 13490 / 255-15)).